A 464-amino-acid polypeptide reads, in one-letter code: Na(+)/H(+) antiporter NhaA 1 (464 aa).

11 helical membrane-spanning segments follow: residues 41-61, 85-105, 121-141, 150-170, 180-200, 207-227, 234-254, 329-349, 363-383, 399-419, and 428-448; these read GGLI…SPLA, LHHW…GLEL, VLPI…YMSL, GWGI…ALLA, FLVA…AVFY, SFLI…MIGI, FFVG…ATLA, VAFF…IDFG, VVFG…WLAI, IIGA…IAEL, and IIQA…AGYL.

The protein belongs to the NhaA Na(+)/H(+) (TC 2.A.33) antiporter family.

It localises to the cell inner membrane. It catalyses the reaction Na(+)(in) + 2 H(+)(out) = Na(+)(out) + 2 H(+)(in). Its function is as follows. Na(+)/H(+) antiporter that extrudes sodium in exchange for external protons. This is Na(+)/H(+) antiporter NhaA 1 from Saccharophagus degradans (strain 2-40 / ATCC 43961 / DSM 17024).